Consider the following 322-residue polypeptide: UDP-N-acetylenolpyruvoylglucosamine reductase (322 aa).

The 167-residue stretch at 36 to 202 (RAGGPAQVLF…TSVLFEGVPG (167 aa)) folds into the FAD-binding PCMH-type domain. Arg182 is a catalytic residue. The Proton donor role is filled by Ser231. The active site involves Glu301.

It belongs to the MurB family. FAD is required as a cofactor.

It localises to the cytoplasm. It carries out the reaction UDP-N-acetyl-alpha-D-muramate + NADP(+) = UDP-N-acetyl-3-O-(1-carboxyvinyl)-alpha-D-glucosamine + NADPH + H(+). It participates in cell wall biogenesis; peptidoglycan biosynthesis. Functionally, cell wall formation. The chain is UDP-N-acetylenolpyruvoylglucosamine reductase from Brucella suis (strain ATCC 23445 / NCTC 10510).